The following is a 644-amino-acid chain: 1-deoxy-D-xylulose-5-phosphate synthase (644 aa).

Residues His-72 and 113–115 contribute to the thiamine diphosphate site; that span reads GHA. Asp-144 is a Mg(2+) binding site. Thiamine diphosphate contacts are provided by residues 145 to 146, Asn-174, Tyr-287, and Glu-370; that span reads GA. Asn-174 is a binding site for Mg(2+).

The protein belongs to the transketolase family. DXPS subfamily. In terms of assembly, homodimer. Requires Mg(2+) as cofactor. Thiamine diphosphate is required as a cofactor.

The catalysed reaction is D-glyceraldehyde 3-phosphate + pyruvate + H(+) = 1-deoxy-D-xylulose 5-phosphate + CO2. It functions in the pathway metabolic intermediate biosynthesis; 1-deoxy-D-xylulose 5-phosphate biosynthesis; 1-deoxy-D-xylulose 5-phosphate from D-glyceraldehyde 3-phosphate and pyruvate: step 1/1. Its function is as follows. Catalyzes the acyloin condensation reaction between C atoms 2 and 3 of pyruvate and glyceraldehyde 3-phosphate to yield 1-deoxy-D-xylulose-5-phosphate (DXP). In Prochlorococcus marinus (strain MIT 9313), this protein is 1-deoxy-D-xylulose-5-phosphate synthase.